Here is a 498-residue protein sequence, read N- to C-terminus: ATP synthase subunit beta, chloroplastic (498 aa).

Residue 172 to 179 coordinates ATP; the sequence is GGAGVGKT.

The protein belongs to the ATPase alpha/beta chains family. As to quaternary structure, F-type ATPases have 2 components, CF(1) - the catalytic core - and CF(0) - the membrane proton channel. CF(1) has five subunits: alpha(3), beta(3), gamma(1), delta(1), epsilon(1). CF(0) has four main subunits: a(1), b(1), b'(1) and c(9-12).

Its subcellular location is the plastid. It localises to the chloroplast thylakoid membrane. It catalyses the reaction ATP + H2O + 4 H(+)(in) = ADP + phosphate + 5 H(+)(out). Produces ATP from ADP in the presence of a proton gradient across the membrane. The catalytic sites are hosted primarily by the beta subunits. This is ATP synthase subunit beta, chloroplastic from Cinnamomum camphora (Camphor tree).